The sequence spans 24 residues: Large ribosomal subunit protein uL10 (24 aa).

The protein belongs to the universal ribosomal protein uL10 family. As to quaternary structure, part of the ribosomal stalk of the 50S ribosomal subunit. The N-terminus interacts with L11 and the large rRNA to form the base of the stalk. The C-terminus forms an elongated spine to which L12 dimers bind in a sequential fashion forming a multimeric L10(L12)X complex.

Forms part of the ribosomal stalk, playing a central role in the interaction of the ribosome with GTP-bound translation factors. This chain is Large ribosomal subunit protein uL10 (rplJ), found in Enterobacter cloacae.